We begin with the raw amino-acid sequence, 879 residues long: MPKLKITPMMQQYFKLKEQHPHTILFYRMGDFYEMFFEDAITASKILGITLTSRNKKSDSAQIPMCGIPYHALQGYLAKMVEAGKRVAICEQVEDPSTAQGIVKREVVQIVTPGVVTDNQLLDAKSNNFVTAISRGKNNRYGLSFLDITTGEFIVADFAGSDGEADILDQLTRLTPTELLVSEEELEDFAETIDLATTLIPGLCITPRPHHLFDFDQSHEKLLEHFAVISLDGFGCETLVEGQIAAAILLDYIEETQKSAIHHIEKLSRLELDAILQIDDSSRRNLELTQTIVGGNRSGSLLSVLDLTTTPMGARFLKQAILFPLQDRARILRRLNAVGYFFNNSEARHQIRELLDQVYDIERLNSRITLGSANGRDMLAMKQSLARLPEMLTELRKCDTDELIEIEQTLDTLEDLHQLLDKSIHPDPPTNIREGNLIREGYNAELDEIIVLLRDGKKLILDLEAKERERTGIAKLKVSYNRVFGYFIEVSRAQSSRVPEHYIRKQTLVNAERFITPELKEFETKVLGAEDRRLELEYQLFATVRNELASHSSRFLATAHQLALLDFYASAAEVSQQYNYHRPEIRDDGSLEIREGRHPVIERSLPAGKFVPNDVYLDQAENEILVITGPNMAGKSTVLRQTALIVLMAQMGYYVPADSARIGVVDRIFTRVGAMDDLRRGQSTFMVEMSETANILNNATPRSLVILDEIGRGTSTYDGLSIAWAVTEHLVQKDGIGVKTMFATHYHELTDLARRYARIQNYSIAVREWQKSVIFLHKLIKGGTSRSYGIQVAALAGVPAQVVERAHEILHSIESGDFLAGEKVGGQPQKELSEHKPHQPSLFAPPTDEIRTKIREMDLDELTPRQALDALYALKEMTV.

629–636 (GPNMAGKS) is a binding site for ATP. Positions 824–845 (VGGQPQKELSEHKPHQPSLFAP) are disordered.

This sequence belongs to the DNA mismatch repair MutS family.

Functionally, this protein is involved in the repair of mismatches in DNA. It is possible that it carries out the mismatch recognition step. This protein has a weak ATPase activity. In Desulfotalea psychrophila (strain LSv54 / DSM 12343), this protein is DNA mismatch repair protein MutS.